A 505-amino-acid chain; its full sequence is Deoxyguanosinetriphosphate triphosphohydrolase (505 aa).

Residues 66-273 (RLTHSMEVQQ…MEAADDISYC (208 aa)) form the HD domain.

The protein belongs to the dGTPase family. Type 1 subfamily. As to quaternary structure, homotetramer. It depends on Mg(2+) as a cofactor.

The catalysed reaction is dGTP + H2O = 2'-deoxyguanosine + triphosphate + H(+). With respect to regulation, inhibited by the action of reducing agents such as dithiothreitol and 2-mercaptoethanol. Functionally, dGTPase preferentially hydrolyzes dGTP over the other canonical NTPs. The polypeptide is Deoxyguanosinetriphosphate triphosphohydrolase (Shigella boydii).